The chain runs to 163 residues: C-type lectin lectoxin-Lio1 (163 aa).

The N-terminal stretch at Met-1–Ala-21 is a signal peptide. Cystine bridges form between Cys-25–Cys-36, Cys-53–Cys-152, and Cys-127–Cys-144. In terms of domain architecture, C-type lectin spans Ser-32–Lys-153. The short motif at Glu-117–Asn-119 is the Mannose-binding element. Residues Glu-125 and Asp-141 each contribute to the Ca(2+) site.

The protein belongs to the true venom lectin family. Expressed by the venom gland.

It localises to the secreted. Its function is as follows. Mannose-binding lectin which recognizes specific carbohydrate structures and agglutinates a variety of animal cells by binding to cell-surface glycoproteins and glycolipids. May be a calcium-dependent lectin. The chain is C-type lectin lectoxin-Lio1 from Erythrolamprus poecilogyrus (Water snake).